Reading from the N-terminus, the 257-residue chain is Transcription factor LBX2 (257 aa).

The tract at residues 1–43 is disordered; it reads MTSSSKDMKAGSVLQSSGEERRRGPLDQLPPPANSNKPLTPFS. The required for convergent extension movement and hypaxial myogenesis during gastrulation. Required for the formation of thick and thin myofilaments. Required for myod1 expression in the pectoral fin bud. Required for continuous expression of cxcl12a in the posterior lateral mesoderm at the tail bud stage and in adaxial cells at the 10-somite stage stretch occupies residues 1–46; it reads MTSSSKDMKAGSVLQSSGEERRRGPLDQLPPPANSNKPLTPFSIED. Residues 126-185 constitute a DNA-binding region (homeobox); that stretch reads RRKSRTAFTNHQIYELEKRFLYQKYLSPADRDQIAQQLGLTNAQVITWFQNRRAKLKRDL. The disordered stretch occupies residues 206–257; sequence LVSMEDMEDAHGGSGPISPSLSPRAFPQSPSSSRGQTTDEFSEEDEEIEVDD. Polar residues predominate over residues 233–243; the sequence is QSPSSSRGQTT. Residues 245 to 257 show a composition bias toward acidic residues; sequence EFSEEDEEIEVDD.

As to quaternary structure, interacts (via N-terminus) with tle3a/gro2 (via C-terminus).

Its subcellular location is the nucleus. Transcription factor required in several developmental processes. Involved in axis formation during embryonic development by inhibiting tle3a/gro2 from binding to tcf7l1a, thereby facilitating ctnnb1-mediated transcription of canonical Wnt/CTNNB1 signaling target genes. Regulates convergent extension movements and hypaxial myogenesis during gastrulation by activating non-canonical Wnt signaling via wnt5b. Required for the formation of myofibrils and fusion of fast muscle precursor cells, potentially via transcriptional regulation of genes specific to thick and thin myofilaments. Regulates the migration of the posterior lateral line primordium during embryonic development, possibly via regulation of cxcl12a/sdf1a expression in the posterior lateral mesoderm, thereby modulating the deposition of neuromasts at correct intervals. This is Transcription factor LBX2 from Danio rerio (Zebrafish).